The sequence spans 343 residues: tRNA N6-adenosine threonylcarbamoyltransferase (343 aa).

Fe cation-binding residues include His-108 and His-112. Substrate-binding positions include 129 to 133 (LISGG), Asp-161, Glu-178, and Ser-258. Residue Asp-286 coordinates Fe cation.

The protein belongs to the KAE1 / TsaD family. The cofactor is Fe(2+).

Its subcellular location is the cytoplasm. It carries out the reaction L-threonylcarbamoyladenylate + adenosine(37) in tRNA = N(6)-L-threonylcarbamoyladenosine(37) in tRNA + AMP + H(+). Required for the formation of a threonylcarbamoyl group on adenosine at position 37 (t(6)A37) in tRNAs that read codons beginning with adenine. Is probably involved in the transfer of the threonylcarbamoyl moiety of threonylcarbamoyl-AMP (TC-AMP) to the N6 group of A37. The protein is tRNA N6-adenosine threonylcarbamoyltransferase of Pyrobaculum aerophilum (strain ATCC 51768 / DSM 7523 / JCM 9630 / CIP 104966 / NBRC 100827 / IM2).